The primary structure comprises 341 residues: Ketol-acid reductoisomerase (NADP(+)) (341 aa).

The 182-residue stretch at 1–182 (MTEMFYDDDA…GGTRAGVIKT (182 aa)) folds into the KARI N-terminal Rossmann domain. NADP(+) is bound by residues 25 to 28 (YGSQ), Lys48, Ser51, Ser53, and 83 to 86 (DQHQ). His108 is an active-site residue. Gly134 lines the NADP(+) pocket. The KARI C-terminal knotted domain maps to 183 to 328 (TFTEETETDL…RELRGLFSWQ (146 aa)). Residues Asp191, Glu195, Glu227, and Glu231 each contribute to the Mg(2+) site. Substrate is bound at residue Ser252.

Belongs to the ketol-acid reductoisomerase family. It depends on Mg(2+) as a cofactor.

The catalysed reaction is (2R)-2,3-dihydroxy-3-methylbutanoate + NADP(+) = (2S)-2-acetolactate + NADPH + H(+). It carries out the reaction (2R,3R)-2,3-dihydroxy-3-methylpentanoate + NADP(+) = (S)-2-ethyl-2-hydroxy-3-oxobutanoate + NADPH + H(+). It participates in amino-acid biosynthesis; L-isoleucine biosynthesis; L-isoleucine from 2-oxobutanoate: step 2/4. Its pathway is amino-acid biosynthesis; L-valine biosynthesis; L-valine from pyruvate: step 2/4. In terms of biological role, involved in the biosynthesis of branched-chain amino acids (BCAA). Catalyzes an alkyl-migration followed by a ketol-acid reduction of (S)-2-acetolactate (S2AL) to yield (R)-2,3-dihydroxy-isovalerate. In the isomerase reaction, S2AL is rearranged via a Mg-dependent methyl migration to produce 3-hydroxy-3-methyl-2-ketobutyrate (HMKB). In the reductase reaction, this 2-ketoacid undergoes a metal-dependent reduction by NADPH to yield (R)-2,3-dihydroxy-isovalerate. The polypeptide is Ketol-acid reductoisomerase (NADP(+)) (Arthrobacter sp. (strain FB24)).